The chain runs to 608 residues: Chaperone protein DnaK (608 aa).

At T175 the chain carries Phosphothreonine; by autocatalysis.

This sequence belongs to the heat shock protein 70 family.

Its function is as follows. Acts as a chaperone. This chain is Chaperone protein DnaK, found in Finegoldia magna (strain ATCC 29328 / DSM 20472 / WAL 2508) (Peptostreptococcus magnus).